Reading from the N-terminus, the 1049-residue chain is Self-sufficient cytochrome P450 monooxygenase CYP505E4 (1049 aa).

Residue C405 coordinates heme. Residues 462-492 form a disordered region; the sequence is ATALSQHNMSAGATSSPGSSAHPAGNKNAQD. The span at 471–486 shows a compositional bias: low complexity; sequence SAGATSSPGSSAHPAG. In terms of domain architecture, Flavodoxin-like spans 499 to 640; it reads ISFFYGSNSG…DLEVWEETNL (142 aa). FMN contacts are provided by residues 505-509 and 584-616; these read SNSGT and VFGC…TRLT. The 229-residue stretch at 678–906 folds into the FAD-binding FR-type domain; that stretch reads RDLIEGKVTA…RPAKEAFHLP (229 aa).

The protein in the N-terminal section; belongs to the cytochrome P450 family. Requires FAD as cofactor. The cofactor is FMN. It depends on heme as a cofactor.

It carries out the reaction 2 oxidized [cytochrome P450] + NADPH = 2 reduced [cytochrome P450] + NADP(+) + H(+). The catalysed reaction is an organic molecule + reduced [NADPH--hemoprotein reductase] + O2 = an alcohol + oxidized [NADPH--hemoprotein reductase] + H2O + H(+). The enzyme catalyses dodecanoate + reduced [NADPH--hemoprotein reductase] + O2 = 5-hydroxydodecanoate + oxidized [NADPH--hemoprotein reductase] + H2O + H(+). It catalyses the reaction tetradecanoate + reduced [NADPH--hemoprotein reductase] + O2 = 7-hydroxytetradecanoate + oxidized [NADPH--hemoprotein reductase] + H2O + H(+). It carries out the reaction dodecan-1-ol + reduced [NADPH--hemoprotein reductase] + O2 = 1,5-dodecanediol + oxidized [NADPH--hemoprotein reductase] + H2O + H(+). The catalysed reaction is dodecan-1-ol + reduced [NADPH--hemoprotein reductase] + O2 = 1,4-dodecanediol + oxidized [NADPH--hemoprotein reductase] + H2O + H(+). The enzyme catalyses dodecan-1-ol + reduced [NADPH--hemoprotein reductase] + O2 = 1,6-dodecanediol + oxidized [NADPH--hemoprotein reductase] + H2O + H(+). In terms of biological role, self-sufficient cytochrome P450 monooxygenase that catalyzes the regioselective in-chain hydroxylation of alkanes, fatty alcohols, and fatty acids at the omega-7 position. Performs hydroxylation of C10-C16 n-alkanes and C12 and C14 fatty alcohols; and thereby enables the one step biocatalytic synthesis of rare alcohols such as 5-dodecanol and 7-tetradecanol. Converts 1-dodecanol into 1,5-dodecanediol as major product with very little sub-terminally hydroxylated products with the 1,4-dodecanediol and 1,6-dodecanediol more abundant. Converts dodecanoic acid to 5-hydroxydodecanoic acid which can be further converted into delta-dodecalactone by lactonization of the 5-hydroxy acid at low pH. Also gives sub-terminal hydroxylation of dodecanoic acid with 9-hydroxydodecanoic acid being the second most abundant product. This is Self-sufficient cytochrome P450 monooxygenase CYP505E4 from Penicillium freii.